The chain runs to 231 residues: ATP phosphoribosyltransferase (231 aa).

The protein belongs to the ATP phosphoribosyltransferase family. Short subfamily. As to quaternary structure, heteromultimer composed of HisG and HisZ subunits.

It localises to the cytoplasm. It catalyses the reaction 1-(5-phospho-beta-D-ribosyl)-ATP + diphosphate = 5-phospho-alpha-D-ribose 1-diphosphate + ATP. Its pathway is amino-acid biosynthesis; L-histidine biosynthesis; L-histidine from 5-phospho-alpha-D-ribose 1-diphosphate: step 1/9. Its function is as follows. Catalyzes the condensation of ATP and 5-phosphoribose 1-diphosphate to form N'-(5'-phosphoribosyl)-ATP (PR-ATP). Has a crucial role in the pathway because the rate of histidine biosynthesis seems to be controlled primarily by regulation of HisG enzymatic activity. This is ATP phosphoribosyltransferase from Brucella ovis (strain ATCC 25840 / 63/290 / NCTC 10512).